The chain runs to 227 residues: UPF0173 metal-dependent hydrolase Cmaq_1073 (227 aa).

Belongs to the UPF0173 family.

In Caldivirga maquilingensis (strain ATCC 700844 / DSM 13496 / JCM 10307 / IC-167), this protein is UPF0173 metal-dependent hydrolase Cmaq_1073.